Reading from the N-terminus, the 357-residue chain is Geranylgeranyl pyrophosphate synthase spyE (357 aa).

A disordered region spans residues 36-60 (EAQSQAVPGTRTETEPTGSSPSDLQ). The span at 50–59 (EPTGSSPSDL) shows a compositional bias: polar residues. Lys84, Arg87, and His116 together coordinate isopentenyl diphosphate. Mg(2+) is bound by residues Asp123 and Asp127. Dimethylallyl diphosphate is bound at residue Arg132. Residue Arg133 coordinates isopentenyl diphosphate. Dimethylallyl diphosphate is bound by residues Lys210, Thr211, and Gln244. Mg(2+) is bound at residue Asp247. Positions 251, 261, and 271 each coordinate dimethylallyl diphosphate.

It belongs to the FPP/GGPP synthase family. Requires Mg(2+) as cofactor.

It catalyses the reaction isopentenyl diphosphate + dimethylallyl diphosphate = (2E)-geranyl diphosphate + diphosphate. It carries out the reaction isopentenyl diphosphate + (2E)-geranyl diphosphate = (2E,6E)-farnesyl diphosphate + diphosphate. The catalysed reaction is isopentenyl diphosphate + (2E,6E)-farnesyl diphosphate = (2E,6E,10E)-geranylgeranyl diphosphate + diphosphate. It participates in secondary metabolite biosynthesis; terpenoid biosynthesis. In terms of biological role, geranylgeranyl pyrophosphate synthase; part of the gene cluster that mediates the biosynthesis of meroterpenoids called sartorypyrones. Within the pathway, spyE provides the spyF cosubstrate geranylgeranyl pyrophosphate (GGPP) for the prenylation of triacetic acid lactone (TAL). The biosynthesis of sartorypyrones begins with the production of triacetic acid lactone (TAL) by the NR-PKS spyA using one molecule of acetyl-CoA and two molecules of malonyl-CoA. The prenyltransferase spyF then conjugates geranylgeranyl pyrophosphate (GGPP) to TAL to form geranylgeranyl-triacetate lactone, for which the pathway-specific geranylgeranyl pyrophosphate synthase (GGPS) spyE is required to provide GGPP. Subsequently, geranylgeranyl-triacetate lactone is epoxidized at the terminal olein by the FAD-dependent monooxygenase spyC, followed by cyclization of the terpenoid component catalyzed by the terpene cyclase spyD to produce both the bicyclic sartorypyrone F and the monocyclic sartorypyrone D. Finally, the last step of the biosynthesis involves the acetylation of the meroterpenoids sartorypyrones D and F by the acetyltransferase SpyB to produce sartorypyrones A and G, respectively. The protein is Geranylgeranyl pyrophosphate synthase spyE of Aspergillus fumigatus (strain ATCC MYA-4609 / CBS 101355 / FGSC A1100 / Af293) (Neosartorya fumigata).